A 265-amino-acid chain; its full sequence is uncharacterized protein (265 aa).

A helical; Signal-anchor for type II membrane protein membrane pass occupies residues K3–F23. N-linked (GlcNAc...) asparagine; by host glycosylation is found at N37 and N125. The stretch at N37 to I94 forms a coiled coil. A coiled-coil region spans residues N158–N257.

Its subcellular location is the host membrane. It localises to the virion. This is an uncharacterized protein from Acanthamoeba polyphaga (Amoeba).